The sequence spans 110 residues: MFKGSVSLYILCFALGLRNTFLIYNVCNNIKNNCMDNTSGPIGDTIFLIYGIIIIIGPRRCFFFYLKRVVLLQGTHEWCTQGLFPWLKKLEITNVHCHLRRFIICQLHLI.

The next 2 membrane-spanning stretches (helical) occupy residues 6 to 26 (VSLYILCFALGLRNTFLIYNV) and 38 to 58 (TSGPIGDTIFLIYGIIIIIGP).

It is found in the membrane. This is an uncharacterized protein from Saccharomyces cerevisiae (strain ATCC 204508 / S288c) (Baker's yeast).